Consider the following 296-residue polypeptide: Stanniocalcin-2 (296 aa).

An N-terminal signal peptide occupies residues 1 to 24 (MCAERLGQFVTLALVFATLDPARG). The interval 22–44 (ARGTDSTNPPEGPQDRGSQQKGR) is disordered. Asn73 carries N-linked (GlcNAc...) asparagine glycosylation. Positions 236 to 296 (RPYHRDTDHH…EQSEYSDIRR (61 aa)) are disordered. Residues 238-258 (YHRDTDHHLTANRGAKGERGS) are compositionally biased toward basic and acidic residues.

It belongs to the stanniocalcin family. As to quaternary structure, homodimer; disulfide-linked. As to expression, expressed in a variety of tissues. Strongly expressed in ovary and to a lesser extent in kidney.

It localises to the secreted. Has an anti-hypocalcemic action on calcium and phosphate homeostasis. The polypeptide is Stanniocalcin-2 (Stc2) (Rattus norvegicus (Rat)).